The primary structure comprises 356 residues: Transcription elongation factor, mitochondrial (356 aa).

The transit peptide at 1–35 directs the protein to the mitochondrion; sequence MTVPSLLLAGGRWRCFPLPLASSLFQALHNSCCRK.

It belongs to the TEFM family. Interacts with POLRMT.

It localises to the mitochondrion matrix. The protein localises to the mitochondrion nucleoid. Its function is as follows. Transcription elongation factor which increases mitochondrial RNA polymerase processivity. Regulates transcription of the mitochondrial genome, including genes important for the oxidative phosphorylation machinery. The protein is Transcription elongation factor, mitochondrial (TEFM) of Bos taurus (Bovine).